Consider the following 976-residue polypeptide: Vacuolar membrane protease (976 aa).

At 1–15 (MKLKSVFRSVLKYRK) the chain is on the cytoplasmic side. A helical membrane pass occupies residues 16–36 (TNLSLLLLITYSIITLLYIFD). At 37-359 (HERYKLNLPK…KFFVISAKTL (323 aa)) the chain is on the vacuolar side. Residues asparagine 96 and asparagine 121 are each glycosylated (N-linked (GlcNAc...) asparagine). Positions 156 and 168 each coordinate Zn(2+). N-linked (GlcNAc...) asparagine glycosylation occurs at asparagine 189. The active-site Proton acceptor is glutamate 200. Glutamate 201 provides a ligand contact to Zn(2+). N-linked (GlcNAc...) asparagine glycosylation is found at asparagine 212 and asparagine 217. Residues glutamate 226 and histidine 300 each coordinate Zn(2+). Residues 360-380 (FYWNCIFLLVSPVVAIGLYLI) form a helical membrane-spanning segment. Residues 381–392 (SRDRMTWKSHSW) are Cytoplasmic-facing. The helical transmembrane segment at 393–412 (LSWTRFPLSLAAGIIVQKLF) threads the bilayer. At 413-428 (SNDIIRSNPLTFSRNY) the chain is on the vacuolar side. Residues 429–449 (FWPISAFFTQVIFTSYVLINC) form a helical membrane-spanning segment. At 450 to 461 (SNFFFPCADMKS) the chain is on the cytoplasmic side. Residues 462–482 (LSIIELFIILWTILLFTSKLL) traverse the membrane as a helical segment. The Vacuolar portion of the chain corresponds to 483 to 496 (YSSDYRYTGLYPLS). Residues 497–517 (IFFLLSTIAAILRLLALALGM) traverse the membrane as a helical segment. The Cytoplasmic portion of the chain corresponds to 518 to 627 (RTRKRLGREC…NSLKLEYTDY (110 aa)). The interval 528 to 610 (RDHHSNYSSH…PLLKGSNSME (83 aa)) is disordered. Over residues 549–558 (NLEQPQDQFT) the composition is skewed to polar residues. The span at 559 to 570 (SSQDDQASIQDD) shows a compositional bias: low complexity. Basic and acidic residues predominate over residues 582-601 (NVDEDHGMDSSSQQHDERVP). The chain crosses the membrane as a helical span at residues 628–648 (AWIIQFLLIVPIPSFILFNSV). Residues 649-668 (DVIMDALNHTVQEGSKATFD) are Vacuolar-facing. Asparagine 656 is a glycosylation site (N-linked (GlcNAc...) asparagine). Residues 669 to 689 (VLRFGMVGSILMALPILPFFY) traverse the membrane as a helical segment. At 690-692 (KVN) the chain is on the cytoplasmic side. The chain crosses the membrane as a helical span at residues 693 to 713 (YITISLTALLFLISASKTLLV). Topologically, residues 714-976 (HPFTNSNPLK…LVIVKDAIIL (263 aa)) are vacuolar. Asparagine 768, asparagine 796, asparagine 811, asparagine 866, and asparagine 937 each carry an N-linked (GlcNAc...) asparagine glycan.

Belongs to the peptidase M28 family. The cofactor is Zn(2+).

Its subcellular location is the vacuole membrane. Functionally, may be involved in vacuolar sorting and osmoregulation. The protein is Vacuolar membrane protease of Saccharomyces cerevisiae (strain RM11-1a) (Baker's yeast).